The sequence spans 235 residues: Serine protease SplA (235 aa).

The N-terminal stretch at 1 to 35 (MNKNVMVKGLTALTILTSLGFAENISNQPHSIAKA) is a signal peptide. Catalysis depends on charge relay system residues H74, D113, and S189.

This sequence belongs to the peptidase S1B family.

Its subcellular location is the secreted. The chain is Serine protease SplA (splA) from Staphylococcus aureus (strain USA300).